Consider the following 391-residue polypeptide: 5-amino-6-(D-ribitylamino)uracil--L-tyrosine 4-hydroxyphenyl transferase (391 aa).

In terms of domain architecture, Radical SAM core spans 55–302 (VTYVINRNIN…GAVARIYLGN (248 aa)). The [4Fe-4S] cluster site is built by Cys-69, Cys-73, and Cys-76.

The protein belongs to the radical SAM superfamily. CofH family. Consists of two subunits, CofG and CofH. [4Fe-4S] cluster is required as a cofactor.

The catalysed reaction is 5-amino-6-(D-ribitylamino)uracil + L-tyrosine + S-adenosyl-L-methionine = 5-amino-5-(4-hydroxybenzyl)-6-(D-ribitylimino)-5,6-dihydrouracil + 2-iminoacetate + 5'-deoxyadenosine + L-methionine + H(+). It participates in cofactor biosynthesis; coenzyme F0 biosynthesis. Functionally, catalyzes the radical-mediated synthesis of 5-amino-5-(4-hydroxybenzyl)-6-(D-ribitylimino)-5,6-dihydrouracil from 5-amino-6-(D-ribitylamino)uracil and L-tyrosine. This Nostoc sp. (strain PCC 7120 / SAG 25.82 / UTEX 2576) protein is 5-amino-6-(D-ribitylamino)uracil--L-tyrosine 4-hydroxyphenyl transferase.